Consider the following 583-residue polypeptide: Isocitrate dehydrogenase kinase/phosphatase (583 aa).

Residues 315–321 and Lys-336 contribute to the ATP site; that span reads APGIRGM. Asp-371 is a catalytic residue.

This sequence belongs to the AceK family.

Its subcellular location is the cytoplasm. The catalysed reaction is L-seryl-[isocitrate dehydrogenase] + ATP = O-phospho-L-seryl-[isocitrate dehydrogenase] + ADP + H(+). In terms of biological role, bifunctional enzyme which can phosphorylate or dephosphorylate isocitrate dehydrogenase (IDH) on a specific serine residue. This is a regulatory mechanism which enables bacteria to bypass the Krebs cycle via the glyoxylate shunt in response to the source of carbon. When bacteria are grown on glucose, IDH is fully active and unphosphorylated, but when grown on acetate or ethanol, the activity of IDH declines drastically concomitant with its phosphorylation. This Salmonella dublin (strain CT_02021853) protein is Isocitrate dehydrogenase kinase/phosphatase.